Consider the following 190-residue polypeptide: Ferric nitrobindin-like protein (190 aa).

Residues 20–26 (GNWAGAG) carry the GXWXGXG motif.

It belongs to the nitrobindin family.

This is Ferric nitrobindin-like protein from Streptomyces griseus subsp. griseus (strain JCM 4626 / CBS 651.72 / NBRC 13350 / KCC S-0626 / ISP 5235).